A 255-amino-acid chain; its full sequence is 4-hydroxy-tetrahydrodipicolinate reductase (255 aa).

NAD(+) is bound by residues 9–14, Asp35, 89–91, and 115–118; these read GFKGKM, GTT, and APNF. Residue His145 is the Proton donor/acceptor of the active site. His146 is a (S)-2,3,4,5-tetrahydrodipicolinate binding site. Lys149 functions as the Proton donor in the catalytic mechanism. Residue 155–156 participates in (S)-2,3,4,5-tetrahydrodipicolinate binding; that stretch reads GT.

The protein belongs to the DapB family.

It is found in the cytoplasm. The catalysed reaction is (S)-2,3,4,5-tetrahydrodipicolinate + NAD(+) + H2O = (2S,4S)-4-hydroxy-2,3,4,5-tetrahydrodipicolinate + NADH + H(+). It catalyses the reaction (S)-2,3,4,5-tetrahydrodipicolinate + NADP(+) + H2O = (2S,4S)-4-hydroxy-2,3,4,5-tetrahydrodipicolinate + NADPH + H(+). It participates in amino-acid biosynthesis; L-lysine biosynthesis via DAP pathway; (S)-tetrahydrodipicolinate from L-aspartate: step 4/4. Functionally, catalyzes the conversion of 4-hydroxy-tetrahydrodipicolinate (HTPA) to tetrahydrodipicolinate. The sequence is that of 4-hydroxy-tetrahydrodipicolinate reductase from Streptococcus pneumoniae (strain P1031).